We begin with the raw amino-acid sequence, 854 residues long: Valine--tRNA ligase (854 aa).

The 'HIGH' region signature appears at 46-56 (PTVSGDLHIGH). The 'KMSKS' region motif lies at 551-555 (KMSKS). Lys-554 contacts ATP.

The protein belongs to the class-I aminoacyl-tRNA synthetase family. ValS type 2 subfamily. In terms of assembly, monomer.

Its subcellular location is the cytoplasm. It catalyses the reaction tRNA(Val) + L-valine + ATP = L-valyl-tRNA(Val) + AMP + diphosphate. Functionally, catalyzes the attachment of valine to tRNA(Val). As ValRS can inadvertently accommodate and process structurally similar amino acids such as threonine, to avoid such errors, it has a 'posttransfer' editing activity that hydrolyzes mischarged Thr-tRNA(Val) in a tRNA-dependent manner. This chain is Valine--tRNA ligase, found in Orientia tsutsugamushi (strain Boryong) (Rickettsia tsutsugamushi).